Consider the following 734-residue polypeptide: Photosystem I P700 chlorophyll a apoprotein A2 (734 aa).

Transmembrane regions (helical) follow at residues 46-69 (IFAS…FHVA), 135-158 (LYNG…LHLQ), 175-199 (LNHH…HVAI), 273-291 (IAHH…GHMY), 330-353 (IHFQ…QHMY), 369-395 (AALY…IFFI), 417-439 (AIIS…LYVH), and 517-535 (FLVH…LILV). Cysteine 559 and cysteine 568 together coordinate [4Fe-4S] cluster. Transmembrane regions (helical) follow at residues 575–596 (AFYL…YWHW) and 643–665 (LSVW…MFLI). Chlorophyll a-binding residues include histidine 654, methionine 662, and tyrosine 670. Tryptophan 671 is a binding site for phylloquinone. Residues 707–727 (LVGLAHFSVGYIFTYAAFLIA) form a helical membrane-spanning segment.

The protein belongs to the PsaA/PsaB family. In terms of assembly, the PsaA/B heterodimer binds the P700 chlorophyll special pair and subsequent electron acceptors. PSI consists of a core antenna complex that captures photons, and an electron transfer chain that converts photonic excitation into a charge separation. The eukaryotic PSI reaction center is composed of at least 11 subunits. P700 is a chlorophyll a/chlorophyll a' dimer, A0 is one or more chlorophyll a, A1 is one or both phylloquinones and FX is a shared 4Fe-4S iron-sulfur center. is required as a cofactor.

Its subcellular location is the plastid. The protein localises to the chloroplast thylakoid membrane. The catalysed reaction is reduced [plastocyanin] + hnu + oxidized [2Fe-2S]-[ferredoxin] = oxidized [plastocyanin] + reduced [2Fe-2S]-[ferredoxin]. Its function is as follows. PsaA and PsaB bind P700, the primary electron donor of photosystem I (PSI), as well as the electron acceptors A0, A1 and FX. PSI is a plastocyanin-ferredoxin oxidoreductase, converting photonic excitation into a charge separation, which transfers an electron from the donor P700 chlorophyll pair to the spectroscopically characterized acceptors A0, A1, FX, FA and FB in turn. Oxidized P700 is reduced on the lumenal side of the thylakoid membrane by plastocyanin. In Morus indica (Mulberry), this protein is Photosystem I P700 chlorophyll a apoprotein A2.